The sequence spans 160 residues: Large ribosomal subunit protein uL11 (160 aa).

This sequence belongs to the universal ribosomal protein uL11 family. Part of the ribosomal stalk of the 50S ribosomal subunit. Interacts with L10 and the large rRNA to form the base of the stalk. L10 forms an elongated spine to which L12 dimers bind in a sequential fashion forming a multimeric L10(L12)X complex.

In terms of biological role, forms part of the ribosomal stalk which helps the ribosome interact with GTP-bound translation factors. The sequence is that of Large ribosomal subunit protein uL11 from Methanococcus aeolicus (strain ATCC BAA-1280 / DSM 17508 / OCM 812 / Nankai-3).